Consider the following 546-residue polypeptide: Chaperonin GroEL 1 (546 aa).

Residues 30-33 (TLGP), lysine 51, 87-91 (DGTTT), glycine 415, 479-481 (NAA), and aspartate 495 contribute to the ATP site. A disordered region spans residues 526–546 (KEDAPMPGGMPGGMGGMGMDM). Gly residues predominate over residues 534–546 (GMPGGMGGMGMDM).

Belongs to the chaperonin (HSP60) family. In terms of assembly, forms a cylinder of 14 subunits composed of two heptameric rings stacked back-to-back. Interacts with the co-chaperonin GroES.

Its subcellular location is the cytoplasm. The enzyme catalyses ATP + H2O + a folded polypeptide = ADP + phosphate + an unfolded polypeptide.. In terms of biological role, together with its co-chaperonin GroES, plays an essential role in assisting protein folding. The GroEL-GroES system forms a nano-cage that allows encapsulation of the non-native substrate proteins and provides a physical environment optimized to promote and accelerate protein folding. The sequence is that of Chaperonin GroEL 1 from Burkholderia cenocepacia (strain HI2424).